The chain runs to 157 residues: uncharacterized protein (157 aa).

It belongs to the MG067/MG068/MG395 family.

This is an uncharacterized protein from Mycoplasma pneumoniae (strain ATCC 29342 / M129 / Subtype 1) (Mycoplasmoides pneumoniae).